We begin with the raw amino-acid sequence, 196 residues long: uncharacterized protein (196 aa).

The helical transmembrane segment at 22–42 (MIIIPMALLVFILIIGSFFAI) threads the bilayer.

It is found in the cell membrane. This is an uncharacterized protein from Lactobacillus acidophilus (strain ATCC 700396 / NCK56 / N2 / NCFM).